A 336-amino-acid polypeptide reads, in one-letter code: Pyridoxal 5'-phosphate synthase subunit PdxS (336 aa).

A D-ribose 5-phosphate-binding site is contributed by D30. The active-site Schiff-base intermediate with D-ribose 5-phosphate is the K87. G159 lines the D-ribose 5-phosphate pocket. R171 contributes to the D-glyceraldehyde 3-phosphate binding site. Residues G257 and 278–279 (GS) each bind D-ribose 5-phosphate.

This sequence belongs to the PdxS/SNZ family. As to quaternary structure, in the presence of PdxT, forms a dodecamer of heterodimers.

The enzyme catalyses aldehydo-D-ribose 5-phosphate + D-glyceraldehyde 3-phosphate + L-glutamine = pyridoxal 5'-phosphate + L-glutamate + phosphate + 3 H2O + H(+). It functions in the pathway cofactor biosynthesis; pyridoxal 5'-phosphate biosynthesis. Its function is as follows. Catalyzes the formation of pyridoxal 5'-phosphate from ribose 5-phosphate (RBP), glyceraldehyde 3-phosphate (G3P) and ammonia. The ammonia is provided by the PdxT subunit. Can also use ribulose 5-phosphate and dihydroxyacetone phosphate as substrates, resulting from enzyme-catalyzed isomerization of RBP and G3P, respectively. In Thermoplasma volcanium (strain ATCC 51530 / DSM 4299 / JCM 9571 / NBRC 15438 / GSS1), this protein is Pyridoxal 5'-phosphate synthase subunit PdxS.